The chain runs to 104 residues: uncharacterized protein (104 aa).

Residues 81 to 97 (CLLMLPCISVVMSISSV) traverse the membrane as a helical segment.

The protein localises to the cell membrane. This is an uncharacterized protein from Bacillus subtilis (strain 168).